A 462-amino-acid polypeptide reads, in one-letter code: CUGBP Elav-like family member 3-B (462 aa).

RRM domains lie at 7–88 (IKLF…PADS), 95–175 (RKLF…FADT), and 377–455 (CNIF…LKRP).

The protein belongs to the CELF/BRUNOL family.

It localises to the nucleus. It is found in the cytoplasm. Its function is as follows. RNA-binding protein that may be involved in the regulation of pre-mRNA alternative splicing. The protein is CUGBP Elav-like family member 3-B (tnrc4-b) of Xenopus laevis (African clawed frog).